A 374-amino-acid polypeptide reads, in one-letter code: Dual-specificity RNA methyltransferase RlmN (374 aa).

E94 (proton acceptor) is an active-site residue. In terms of domain architecture, Radical SAM core spans 100 to 339 (EEDRATLCVS…VTIRKTRGDD (240 aa)). A disulfide bridge links C107 with C344. [4Fe-4S] cluster is bound by residues C114, C118, and C121. S-adenosyl-L-methionine is bound by residues 168-169 (GE), S200, 222-224 (SLH), and N301. C344 (S-methylcysteine intermediate) is an active-site residue.

The protein belongs to the radical SAM superfamily. RlmN family. [4Fe-4S] cluster is required as a cofactor.

The protein resides in the cytoplasm. It carries out the reaction adenosine(2503) in 23S rRNA + 2 reduced [2Fe-2S]-[ferredoxin] + 2 S-adenosyl-L-methionine = 2-methyladenosine(2503) in 23S rRNA + 5'-deoxyadenosine + L-methionine + 2 oxidized [2Fe-2S]-[ferredoxin] + S-adenosyl-L-homocysteine. The catalysed reaction is adenosine(37) in tRNA + 2 reduced [2Fe-2S]-[ferredoxin] + 2 S-adenosyl-L-methionine = 2-methyladenosine(37) in tRNA + 5'-deoxyadenosine + L-methionine + 2 oxidized [2Fe-2S]-[ferredoxin] + S-adenosyl-L-homocysteine. Its function is as follows. Specifically methylates position 2 of adenine 2503 in 23S rRNA and position 2 of adenine 37 in tRNAs. m2A2503 modification seems to play a crucial role in the proofreading step occurring at the peptidyl transferase center and thus would serve to optimize ribosomal fidelity. The sequence is that of Dual-specificity RNA methyltransferase RlmN from Vibrio vulnificus (strain YJ016).